Consider the following 475-residue polypeptide: Ankyrin repeat, SAM and basic leucine zipper domain-containing protein 1 (475 aa).

The tract at residues 1 to 24 is disordered; it reads MAAAVQRGLPVAGGGESSESEDDG. Residues S17, S18, and S20 each carry the phosphoserine modification. ANK repeat units follow at residues 45–74, 78–107, 110–144, 148–177, 181–210, and 214–243; these read EKNE…SVES, YGWT…NASF, DKHT…DPNV, RLMT…EVNA, NGYT…NKML, and DGKT…PLEG. One can recognise an SAM domain in the interval 272–334; the sequence is SYAAFGDLEI…KILAALKELA (63 aa).

In terms of assembly, interacts with DDX4, PIWIL1, RANBP9 and TDRD1.

The protein localises to the cytoplasm. In terms of biological role, plays a central role during spermatogenesis by repressing transposable elements and preventing their mobilization, which is essential for the germline integrity. Acts via the piRNA metabolic process, which mediates the repression of transposable elements during meiosis by forming complexes composed of piRNAs and Piwi proteins and governs the methylation and subsequent repression of transposons. Its association with pi-bodies suggests a participation in the primary piRNAs metabolic process. Required prior to the pachytene stage to facilitate the production of multiple types of piRNAs, including those associated with repeats involved in the regulation of retrotransposons. May act by mediating protein-protein interactions during germ cell maturation. The sequence is that of Ankyrin repeat, SAM and basic leucine zipper domain-containing protein 1 (ASZ1) from Loxodonta africana (African elephant).